The sequence spans 454 residues: Arginine biosynthesis bifunctional protein ArgJ, mitochondrial (454 aa).

Residues Thr184, Lys213, Thr224, Glu311, Asn449, and Thr454 each coordinate substrate. The Nucleophile role is filled by Thr224.

Belongs to the ArgJ family. In terms of assembly, heterodimer of an alpha and a beta chain. Post-translationally, the alpha and beta chains are autoproteolytically processed from a single precursor protein within the mitochondrion.

It is found in the mitochondrion matrix. The catalysed reaction is N(2)-acetyl-L-ornithine + L-glutamate = N-acetyl-L-glutamate + L-ornithine. The enzyme catalyses L-glutamate + acetyl-CoA = N-acetyl-L-glutamate + CoA + H(+). The protein operates within amino-acid biosynthesis; L-arginine biosynthesis; L-ornithine and N-acetyl-L-glutamate from L-glutamate and N(2)-acetyl-L-ornithine (cyclic): step 1/1. It participates in amino-acid biosynthesis; L-arginine biosynthesis; N(2)-acetyl-L-ornithine from L-glutamate: step 1/4. Catalyzes two activities which are involved in the cyclic version of arginine biosynthesis: the synthesis of acetylglutamate from glutamate and acetyl-CoA, and of ornithine by transacetylation between acetylornithine and glutamate. In Aspergillus clavatus (strain ATCC 1007 / CBS 513.65 / DSM 816 / NCTC 3887 / NRRL 1 / QM 1276 / 107), this protein is Arginine biosynthesis bifunctional protein ArgJ, mitochondrial.